We begin with the raw amino-acid sequence, 307 residues long: Quinolinate synthase (307 aa).

Residues His23 and Ser40 each contribute to the iminosuccinate site. Cys86 contacts [4Fe-4S] cluster. Iminosuccinate contacts are provided by residues 112–114 and Ser129; that span reads YVN. Cys173 lines the [4Fe-4S] cluster pocket. Iminosuccinate is bound by residues 199–201 and Thr216; that span reads HPE. A [4Fe-4S] cluster-binding site is contributed by Cys265.

The protein belongs to the quinolinate synthase family. Type 2 subfamily. [4Fe-4S] cluster serves as cofactor.

The protein resides in the cytoplasm. The enzyme catalyses iminosuccinate + dihydroxyacetone phosphate = quinolinate + phosphate + 2 H2O + H(+). It participates in cofactor biosynthesis; NAD(+) biosynthesis; quinolinate from iminoaspartate: step 1/1. Its function is as follows. Catalyzes the condensation of iminoaspartate with dihydroxyacetone phosphate to form quinolinate. This Methanocaldococcus jannaschii (strain ATCC 43067 / DSM 2661 / JAL-1 / JCM 10045 / NBRC 100440) (Methanococcus jannaschii) protein is Quinolinate synthase.